Here is a 185-residue protein sequence, read N- to C-terminus: MTNTIIEKAKERFAHTHESLAREFGAIRAGRANASLLDRITVEYYGAPTPLNQLASITVPEARVLLISPFDKGSIADIERAINESDLGINPANDGSVIRLVIPALTEETRKELAKEVKKVGENAKIAIRNIRRDAMDEAKKQEKEKEITEDQLKTLEKDIQKATDDAVNKIDSMIAEKEKELLTV.

This sequence belongs to the RRF family.

The protein resides in the cytoplasm. In terms of biological role, responsible for the release of ribosomes from messenger RNA at the termination of protein biosynthesis. May increase the efficiency of translation by recycling ribosomes from one round of translation to another. The sequence is that of Ribosome-recycling factor from Streptococcus thermophilus (strain CNRZ 1066).